Reading from the N-terminus, the 104-residue chain is Large ribosomal subunit protein bL21 (104 aa).

Basic residues predominate over residues 78–91 (KRRRQNSRRKRGHR). Residues 78–104 (KRRRQNSRRKRGHRQDHTVVRITGISA) are disordered.

Belongs to the bacterial ribosomal protein bL21 family. Part of the 50S ribosomal subunit. Contacts protein L20.

This protein binds to 23S rRNA in the presence of protein L20. The polypeptide is Large ribosomal subunit protein bL21 (Methylobacterium radiotolerans (strain ATCC 27329 / DSM 1819 / JCM 2831 / NBRC 15690 / NCIMB 10815 / 0-1)).